The primary structure comprises 575 residues: Lysine--tRNA ligase (575 aa).

Glutamate 412 and glutamate 419 together coordinate Mg(2+).

Belongs to the class-II aminoacyl-tRNA synthetase family. As to quaternary structure, homodimer. It depends on Mg(2+) as a cofactor.

The protein localises to the cytoplasm. The enzyme catalyses tRNA(Lys) + L-lysine + ATP = L-lysyl-tRNA(Lys) + AMP + diphosphate. The sequence is that of Lysine--tRNA ligase from Bacteroides fragilis (strain ATCC 25285 / DSM 2151 / CCUG 4856 / JCM 11019 / LMG 10263 / NCTC 9343 / Onslow / VPI 2553 / EN-2).